The sequence spans 316 residues: Protoheme IX farnesyltransferase (316 aa).

Helical transmembrane passes span 32 to 52 (VMSLVVFTAFAGLVLAPGQIN), 53 to 73 (PVLGLIAILCIAVGAGASGAL), 93 to 113 (IPAGRIAPSEALAFGLVLSCF), 116 to 136 (AILGLAVNWLSAGILAFTIFF), 152 to 172 (NIVIGGAAGAFPPMIGWACVT), 180 to 200 (TVLFLIIFLWTPAHFWALALF), 226 to 246 (IVAYAVLTAICAVLPSYLGFA), 248 to 268 (FAYGLVAAALGAIFIYCSIAV), and 289 to 309 (IFYLFAIFSALMIDRLAAMLV).

This sequence belongs to the UbiA prenyltransferase family. Protoheme IX farnesyltransferase subfamily.

It localises to the cell inner membrane. It catalyses the reaction heme b + (2E,6E)-farnesyl diphosphate + H2O = Fe(II)-heme o + diphosphate. It participates in porphyrin-containing compound metabolism; heme O biosynthesis; heme O from protoheme: step 1/1. In terms of biological role, converts heme B (protoheme IX) to heme O by substitution of the vinyl group on carbon 2 of heme B porphyrin ring with a hydroxyethyl farnesyl side group. In Rhizobium etli (strain CIAT 652), this protein is Protoheme IX farnesyltransferase.